The chain runs to 531 residues: Na(+)/H(+) antiporter NhaB (531 aa).

12 helical membrane passes run 13–33 (FLGK…IINP), 34–54 (LVFF…EFIF), 90–110 (LVAN…IYFM), 121–141 (ILIG…TAAF), 145–165 (FLDA…FYAI), 206–226 (LLMH…VGEP), 242–262 (FIIR…LTCV), 308–328 (VIAV…GLIG), 352–372 (EEAL…AVII), 394–414 (LALF…VFVG), 456–476 (GQAA…QLSY), and 482–502 (MALP…SFLL).

It belongs to the NhaB Na(+)/H(+) (TC 2.A.34) antiporter family.

The protein resides in the cell inner membrane. The catalysed reaction is 2 Na(+)(in) + 3 H(+)(out) = 2 Na(+)(out) + 3 H(+)(in). Its function is as follows. Na(+)/H(+) antiporter that extrudes sodium in exchange for external protons. The protein is Na(+)/H(+) antiporter NhaB of Aliivibrio salmonicida (strain LFI1238) (Vibrio salmonicida (strain LFI1238)).